We begin with the raw amino-acid sequence, 102 residues long: Protein translation factor SUI1 homolog (102 aa).

This sequence belongs to the SUI1 family.

This Methanococcus vannielii protein is Protein translation factor SUI1 homolog.